We begin with the raw amino-acid sequence, 385 residues long: Isomaltose glucohydrolase (385 aa).

Residue Trp125 coordinates substrate. Catalysis depends on Asp175, which acts as the Proton acceptor. Glu178 acts as the Proton donor in catalysis. Glu335 (proton acceptor) is an active-site residue.

It belongs to the glycosyl hydrolase 15 family.

It localises to the cytoplasm. It carries out the reaction isomaltose + H2O = beta-D-glucose + D-glucose. Functionally, involved in the intracellular degradation of the cyclic tetrasaccharide cyclobis-(1-6)-alpha-nigerosyl (CNN) formed extracellularly from starch. Catalyzes the hydrolysis of alpha-1,6-glucosidic linkage from the non-reducing end of isomaltose to yield beta-D-glucose and D-glucose. Can also act on panose and isomaltotriose at a lower rate. It displays low or no activity toward CNN and the general GH15 enzyme substrates such as maltose, soluble starch or dextran. In Kribbella flavida (strain DSM 17836 / JCM 10339 / NBRC 14399), this protein is Isomaltose glucohydrolase.